The following is a 228-amino-acid chain: PKHD-type hydroxylase Rmet_3078 (228 aa).

One can recognise a Fe2OG dioxygenase domain in the interval 80–180; it reads IVYPPMFNRY…RVGCFFWIQS (101 aa). Residues His-98, Asp-100, and His-161 each contribute to the Fe cation site. Residue Arg-171 coordinates 2-oxoglutarate.

Fe(2+) is required as a cofactor. Requires L-ascorbate as cofactor.

The chain is PKHD-type hydroxylase Rmet_3078 from Cupriavidus metallidurans (strain ATCC 43123 / DSM 2839 / NBRC 102507 / CH34) (Ralstonia metallidurans).